Consider the following 545-residue polypeptide: MDTSPHSKPSSSSASQSSHSPSPAPVTAPRKTRDSGLCMTQDIPEIPTHCIDNLNSHQLGRGTYGIVEKTRYRRSRNHEYRPAAIKYSSPIHLATLIREAKVMWALRDHSNIIKIYGLYRDARHGQGVVMEYMDCGSMSELIYDRKSIDYTIDHVASWLYQMASAVNTFHRNDQVHRDLKLQNMLLCDRYRTMKLCDFGTFTAMHQSMTSNRGTPITMAPEVFRCEEYNQKSDIYSIGIIMWQMIARNHPYNRNLSVPGLLYNVATASLRPPELDCNPILSDFYKQCWHDDPVSRPTAAECLQYFTALKTEYPNGNVPLADANTNRPVETPPPRVHRPSGLGSASGSGLGTNGRTPTASNHLNAPQAVNTHRRNRSETIQMKPELPYPVMPGEVAASSSGAFRGPRSQSEAKNLRDAGRSQSGQRHPHRNAPPIPIDDRRDSNESNEKDAIFMELLRNDDTRPVDPDARDEASLDIFHQHCSSNKEYADALLLKKEVLRAKHELLSRWPQHQRHVELLERQNYLEQEIAKLEYNSDDDFSITERL.

Residues 1-21 show a composition bias toward low complexity; the sequence is MDTSPHSKPSSSSASQSSHSP. Positions 1 to 35 are disordered; that stretch reads MDTSPHSKPSSSSASQSSHSPSPAPVTAPRKTRDS. The Protein kinase domain maps to 53–308; the sequence is NLNSHQLGRG…AECLQYFTAL (256 aa). Residues 59–67 and Lys86 each bind ATP; that span reads LGRGTYGIV. Asp178 (proton acceptor) is an active-site residue. A disordered region spans residues 316–444; the sequence is NVPLADANTN…PIDDRRDSNE (129 aa). Composition is skewed to polar residues over residues 352–369 and 396–411; these read NGRT…QAVN and ASSS…QSEA.

It belongs to the protein kinase superfamily. STE Ser/Thr protein kinase family. MAP kinase kinase kinase subfamily. As to quaternary structure, interacts with, and is activated by, tap-1. Mg(2+) is required as a cofactor.

The enzyme catalyses L-seryl-[protein] + ATP = O-phospho-L-seryl-[protein] + ADP + H(+). It carries out the reaction L-threonyl-[protein] + ATP = O-phospho-L-threonyl-[protein] + ADP + H(+). Its function is as follows. Part of the Wnt signaling pathway essential for the specification of the mesodermal cell fate in early embryos. Stimulates the wrm-1/lit-1-dependent phosphorylation of pop-1 and plays a role in the initial nuclear accumulation of wrm-1. The sequence is that of Mitogen-activated protein kinase kinase kinase mom-4 from Caenorhabditis briggsae.